The chain runs to 739 residues: Eukaryotic translation initiation factor 3 subunit B (739 aa).

The tract at residues 1–98 is sufficient for interaction with HCR1 and TIF32; that stretch reads MSINEEDYLQ…LFIQFKSTES (98 aa). The tract at residues 1 to 224 is sufficient for interaction with PIC8; the sequence is MSINEEDYLQ…GIQSWGGANF (224 aa). The 88-residue stretch at 37-124 folds into the RRM domain; that stretch reads NYIIVDGAPI…HRLLVNKLSD (88 aa). WD repeat units lie at residues 190–229, 231–293, 301–339, 343–385, 453–502, 537–579, and 592–630; these read PRKG…SIKR, FHQQ…RTFA, QKEM…QLLD, VKVD…QTAR, ELKD…KGGV, IENK…ETNK, and DKFS…YEFT.

Belongs to the eIF-3 subunit B family. As to quaternary structure, component of the eukaryotic translation initiation factor 3 (eIF-3) complex.

The protein localises to the cytoplasm. In terms of biological role, RNA-binding component of the eukaryotic translation initiation factor 3 (eIF-3) complex, which is involved in protein synthesis of a specialized repertoire of mRNAs and, together with other initiation factors, stimulates binding of mRNA and methionyl-tRNAi to the 40S ribosome. The eIF-3 complex specifically targets and initiates translation of a subset of mRNAs involved in cell proliferation. This Candida albicans (strain SC5314 / ATCC MYA-2876) (Yeast) protein is Eukaryotic translation initiation factor 3 subunit B.